A 621-amino-acid polypeptide reads, in one-letter code: uncharacterized protein (621 aa).

Disordered stretches follow at residues 92–134 and 268–310; these read FRNS…QINQ and KINH…DDEI. A compositionally biased stretch (low complexity) spans 94–134; it reads NSSNQSSQSNQVNQSNQSSPSSQISPSSQVNKFNQSSQINQ. Acidic residues predominate over residues 296–310; that stretch reads TNDETNDETDNDDEI. Residues 354 to 401 adopt a coiled-coil conformation; that stretch reads ANKIQNKIIQIVETLNAYKNKQSQIAIEAKNKIKHITVSNKEVSENIE.

This is an uncharacterized protein from Acanthamoeba polyphaga mimivirus (APMV).